Consider the following 321-residue polypeptide: Anthranilate phosphoribosyltransferase (321 aa).

Residues Gly72, 75–76, Thr80, 82–85, 99–107, and Ser111 each bind 5-phospho-alpha-D-ribose 1-diphosphate; these read GD, NVST, and KHGNVSITS. Gly72 provides a ligand contact to anthranilate. Ser84 is a binding site for Mg(2+). Asn102 provides a ligand contact to anthranilate. Arg157 serves as a coordination point for anthranilate. Asp216 and Glu217 together coordinate Mg(2+).

It belongs to the anthranilate phosphoribosyltransferase family. As to quaternary structure, homodimer. Mg(2+) is required as a cofactor.

It carries out the reaction N-(5-phospho-beta-D-ribosyl)anthranilate + diphosphate = 5-phospho-alpha-D-ribose 1-diphosphate + anthranilate. It functions in the pathway amino-acid biosynthesis; L-tryptophan biosynthesis; L-tryptophan from chorismate: step 2/5. Functionally, catalyzes the transfer of the phosphoribosyl group of 5-phosphorylribose-1-pyrophosphate (PRPP) to anthranilate to yield N-(5'-phosphoribosyl)-anthranilate (PRA). The sequence is that of Anthranilate phosphoribosyltransferase from Methanococcus maripaludis (strain C6 / ATCC BAA-1332).